Here is a 468-residue protein sequence, read N- to C-terminus: 6-phospho-beta-galactosidase (468 aa).

Residues Gln19, His116, Asn159, Glu160, and Asn297 each coordinate D-galactose 6-phosphate. Catalysis depends on Glu160, which acts as the Proton donor. Glu375 acts as the Nucleophile in catalysis. D-galactose 6-phosphate-binding residues include Ser428, Trp429, Lys435, and Tyr437.

It belongs to the glycosyl hydrolase 1 family.

It carries out the reaction a 6-phospho-beta-D-galactoside + H2O = D-galactose 6-phosphate + an alcohol. It participates in carbohydrate metabolism; lactose degradation; D-galactose 6-phosphate and beta-D-glucose from lactose 6-phosphate: step 1/1. This chain is 6-phospho-beta-galactosidase, found in Streptococcus pneumoniae (strain JJA).